We begin with the raw amino-acid sequence, 306 residues long: Shugoshin (306 aa).

The stretch at 28-75 (NFKSTNESLIKKNLQLKQQLSQCTKALEKLRNENIALREQNQELIDAT) forms a coiled coil. 2 disordered regions span residues 122 to 196 (PEPS…GRRS) and 223 to 306 (IAPS…DTFF). Residues 133–161 (PKMECNLEKLDESPVRNFPRSDYEEENKS) show a composition bias toward basic and acidic residues. The segment covering 167–181 (NGPSSSSSMTQNLEN) has biased composition (polar residues). The span at 230 to 241 (GGPPKKAPPRKA) shows a compositional bias: pro residues.

It belongs to the shugoshin family.

The protein resides in the nucleus. Its subcellular location is the chromosome. It is found in the centromere. Plays a central role in chromosome cohesion during cell division by preventing premature dissociation of cohesin complex from centromeres after prophase, when most of cohesin complex dissociates from chromosomes arms. The polypeptide is Shugoshin (sgo-1) (Caenorhabditis briggsae).